We begin with the raw amino-acid sequence, 164 residues long: HTH-type transcriptional regulator IscR (164 aa).

In terms of domain architecture, HTH rrf2-type spans Arg2–Asn131. The H-T-H motif DNA-binding region spans Leu28–Lys51. 3 residues coordinate [2Fe-2S] cluster: Cys92, Cys98, and Cys104. Positions Asn143 to Ala164 are disordered. The segment covering Gly152 to Ala164 has biased composition (polar residues).

It depends on [2Fe-2S] cluster as a cofactor.

Regulates the transcription of several operons and genes involved in the biogenesis of Fe-S clusters and Fe-S-containing proteins. This Yersinia pseudotuberculosis serotype O:1b (strain IP 31758) protein is HTH-type transcriptional regulator IscR.